The chain runs to 320 residues: Aspartate carbamoyltransferase catalytic subunit (320 aa).

Arg-57 and Thr-58 together coordinate carbamoyl phosphate. L-aspartate is bound at residue Lys-85. Carbamoyl phosphate-binding residues include Arg-107, His-141, and Gln-144. The L-aspartate site is built by Arg-174 and Arg-228. Carbamoyl phosphate is bound by residues Gly-269 and Pro-270.

The protein belongs to the aspartate/ornithine carbamoyltransferase superfamily. ATCase family. Heterododecamer (2C3:3R2) of six catalytic PyrB chains organized as two trimers (C3), and six regulatory PyrI chains organized as three dimers (R2).

The catalysed reaction is carbamoyl phosphate + L-aspartate = N-carbamoyl-L-aspartate + phosphate + H(+). It functions in the pathway pyrimidine metabolism; UMP biosynthesis via de novo pathway; (S)-dihydroorotate from bicarbonate: step 2/3. Functionally, catalyzes the condensation of carbamoyl phosphate and aspartate to form carbamoyl aspartate and inorganic phosphate, the committed step in the de novo pyrimidine nucleotide biosynthesis pathway. The chain is Aspartate carbamoyltransferase catalytic subunit from Mycobacterium marinum (strain ATCC BAA-535 / M).